We begin with the raw amino-acid sequence, 340 residues long: DnaJ homolog subfamily B member 1 (340 aa).

The J domain occupies 2–70 (GKDYYQTLGL…REIFDRYGEE (69 aa)). Residue T307 is modified to Phosphothreonine.

As to quaternary structure, interacts with DNAJC3. Interacts with HSF1 (via transactivation domain); this interaction results in the inhibition of heat shock- and HSF1-induced transcriptional activity during the attenuation and recovery phase period of the heat shock response. Interacts with BAG3.

Its subcellular location is the cytoplasm. The protein resides in the nucleus. The protein localises to the nucleolus. Its function is as follows. Interacts with HSP70 and can stimulate its ATPase activity. Stimulates the association between HSC70 and HIP. Negatively regulates heat shock-induced HSF1 transcriptional activity during the attenuation and recovery phase period of the heat shock response. Stimulates ATP hydrolysis and the folding of unfolded proteins mediated by HSPA1A/B (in vitro). The chain is DnaJ homolog subfamily B member 1 (Dnajb1) from Mus musculus (Mouse).